The chain runs to 202 residues: uncharacterized protein (202 aa).

An Isoglutamyl lysine isopeptide (Lys-Gln) (interchain with Q-Cter in protein Pup) cross-link involves residue lysine 136.

This is an uncharacterized protein from Mycobacterium tuberculosis (strain ATCC 25618 / H37Rv).